A 574-amino-acid chain; its full sequence is Zinc finger and BTB domain-containing protein 3 (574 aa).

The BTB domain maps to 74–142 (CDCTVMVGST…MYAGQLTLRG (69 aa)). Disordered stretches follow at residues 175-277 (AEAD…SSTE) and 305-346 (SLRV…APAP). Glycyl lysine isopeptide (Lys-Gly) (interchain with G-Cter in SUMO2) cross-links involve residues K181 and K182. Polar residues predominate over residues 187-212 (NSQLPSLEFLSSTSRGTQPSLASAET). A compositionally biased stretch (low complexity) spans 323–334 (PPASAPTSAPAP). S362 is modified (phosphoserine). Residues 364 to 403 (EETDVSDEQPQGPERAFPSGGAVYGAQPSQPEAFEDPGAA) are disordered. 2 C2H2-type zinc fingers span residues 472–494 (PTCK…ATVH) and 500–523 (YECR…RKAH). The span at 526–535 (DLAKRSKPDP) shows a compositional bias: basic and acidic residues. The segment at 526–574 (DLAKRSKPDPEVGPLLGVQPLPGSPTADRQSSSGGGPPKDFVLAPKTNI) is disordered. K532 participates in a covalent cross-link: Glycyl lysine isopeptide (Lys-Gly) (interchain with G-Cter in SUMO2). The residue at position 549 (S549) is a Phosphoserine.

It is found in the nucleus. Functionally, may be involved in transcriptional regulation. The polypeptide is Zinc finger and BTB domain-containing protein 3 (ZBTB3) (Homo sapiens (Human)).